Here is a 396-residue protein sequence, read N- to C-terminus: Subtilisin-like protease 5 (396 aa).

Positions 1–20 are cleaved as a signal peptide; it reads MTGFFTFLSFSLAALSVTNA. Residues 21 to 116 constitute a propeptide that is removed on maturation; the sequence is AHILSVPKGA…VEPDAIISQH (96 aa). The Inhibitor I9 domain maps to 37-113; sequence YIVVMKDDTS…VAFVEPDAII (77 aa). N63 is a glycosylation site (N-linked (GlcNAc...) asparagine). The region spanning 125–396 is the Peptidase S8 domain; it reads PWGLSRLSNR…SRLLYNGSGR (272 aa). Active-site charge relay system residues include D156 and H187. N-linked (GlcNAc...) asparagine glycans are attached at residues N230 and N248. The Charge relay system role is filled by S342. Over residues 376–389 the composition is skewed to polar residues; that stretch reads PTIRNPGPDTTSRL. Residues 376–396 are disordered; that stretch reads PTIRNPGPDTTSRLLYNGSGR. Residue N392 is glycosylated (N-linked (GlcNAc...) asparagine).

It belongs to the peptidase S8 family.

The protein localises to the secreted. In terms of biological role, secreted subtilisin-like serine protease with keratinolytic activity that contributes to pathogenicity. This chain is Subtilisin-like protease 5 (SUB5), found in Trichophyton tonsurans (Scalp ringworm fungus).